Reading from the N-terminus, the 332-residue chain is Ribosomal RNA small subunit methyltransferase C (332 aa).

This sequence belongs to the methyltransferase superfamily. RsmC family. Monomer.

It is found in the cytoplasm. It catalyses the reaction guanosine(1207) in 16S rRNA + S-adenosyl-L-methionine = N(2)-methylguanosine(1207) in 16S rRNA + S-adenosyl-L-homocysteine + H(+). Specifically methylates the guanine in position 1207 of 16S rRNA in the 30S particle. This chain is Ribosomal RNA small subunit methyltransferase C, found in Pseudomonas aeruginosa (strain LESB58).